The following is a 274-amino-acid chain: tRNA pseudouridine synthase A (274 aa).

The active-site Nucleophile is the Asp-57. Tyr-115 lines the substrate pocket.

It belongs to the tRNA pseudouridine synthase TruA family. In terms of assembly, homodimer.

It catalyses the reaction uridine(38/39/40) in tRNA = pseudouridine(38/39/40) in tRNA. Formation of pseudouridine at positions 38, 39 and 40 in the anticodon stem and loop of transfer RNAs. In Frankia casuarinae (strain DSM 45818 / CECT 9043 / HFP020203 / CcI3), this protein is tRNA pseudouridine synthase A.